The following is a 943-amino-acid chain: Isoleucine--tRNA ligase (943 aa).

The 'HIGH' region motif lies at 59–69 (PYANGQIHLGH). An L-isoleucyl-5'-AMP-binding site is contributed by glutamate 577. The short motif at 618–622 (KMSKS) is the 'KMSKS' region element. Lysine 621 is an ATP binding site. Residues cysteine 906, cysteine 909, cysteine 926, and cysteine 929 each coordinate Zn(2+).

The protein belongs to the class-I aminoacyl-tRNA synthetase family. IleS type 1 subfamily. In terms of assembly, monomer. It depends on Zn(2+) as a cofactor.

It localises to the cytoplasm. The enzyme catalyses tRNA(Ile) + L-isoleucine + ATP = L-isoleucyl-tRNA(Ile) + AMP + diphosphate. Functionally, catalyzes the attachment of isoleucine to tRNA(Ile). As IleRS can inadvertently accommodate and process structurally similar amino acids such as valine, to avoid such errors it has two additional distinct tRNA(Ile)-dependent editing activities. One activity is designated as 'pretransfer' editing and involves the hydrolysis of activated Val-AMP. The other activity is designated 'posttransfer' editing and involves deacylation of mischarged Val-tRNA(Ile). The sequence is that of Isoleucine--tRNA ligase from Xanthomonas oryzae pv. oryzae (strain MAFF 311018).